The sequence spans 239 residues: Pathogenesis-related protein 5 (239 aa).

A signal peptide spans 1–23 (MANISSIHILFLVFITSGIAVMA). Disulfide bonds link C32–C238, C79–C89, C94–C99, C146–C228, C151–C211, C159–C174, C178–C187, and C188–C198.

This sequence belongs to the thaumatin family.

Its subcellular location is the secreted. The protein localises to the extracellular space. It localises to the apoplast. In terms of biological role, partially responsible for acquired pathogen resistance. This chain is Pathogenesis-related protein 5, found in Arabidopsis thaliana (Mouse-ear cress).